Consider the following 1029-residue polypeptide: U2 snRNP-associated SURP motif-containing protein (1029 aa).

Disordered stretches follow at residues 1–111 and 141–274; these read MADK…EDEK and VNAA…PSTT. Ala2 carries the post-translational modification N-acetylalanine. The span at 7 to 16 shows a compositional bias: polar residues; that stretch reads GGSQKASSKT. The span at 45 to 54 shows a compositional bias: basic residues; it reads TRPKSPRKHN. A compositionally biased stretch (basic and acidic residues) spans 55–64; it reads YRNESARESL. Ser67 carries the post-translational modification Phosphoserine. Lys80 participates in a covalent cross-link: Glycyl lysine isopeptide (Lys-Gly) (interchain with G-Cter in SUMO2). Positions 92–121 form a coiled coil; sequence AKRTLSKKEQEELKKKEDEKAAAEIYEEFL. Composition is skewed to basic and acidic residues over residues 97 to 111 and 144 to 155; these read SKKE…EDEK and AKEEHETDEKRG. Glycyl lysine isopeptide (Lys-Gly) (interchain with G-Cter in SUMO2) cross-links involve residues Lys145 and Lys168. Over residues 169–178 the composition is skewed to polar residues; that stretch reads NPPNQSSNER. Residues 186 to 222 are compositionally biased toward basic and acidic residues; that stretch reads ETKKPPLKKGEKEKKKSNLELFKEELKQIQEERDERH. Residues 192–232 are a coiled coil; the sequence is LKKGEKEKKKSNLELFKEELKQIQEERDERHKTKGRLSRFE. The residue at position 202 (Ser202) is a Phosphoserine. Residue Lys208 forms a Glycyl lysine isopeptide (Lys-Gly) (interchain with G-Cter in SUMO2) linkage. Ser236 is modified (phosphoserine). Basic and acidic residues predominate over residues 239 to 249; it reads DGQRRSMDAPS. Residues 274–355 form the RRM domain; sequence TNLYLGNINP…FEMKLGWGKA (82 aa). One copy of the SURP motif repeat lies at 430–473; sequence LIHRMIEFVVREGPMFEAMIMNREINNPMFRFLFENQTPAHVYY. At Ser485 the chain carries Phosphoserine. One can recognise a CID domain in the interval 534 to 679; that stretch reads LKEEQRDKLE…KLQNIFLGLV (146 aa). Thr719 carries the phosphothreonine modification. Glycyl lysine isopeptide (Lys-Gly) (interchain with G-Cter in SUMO2) cross-links involve residues Lys748 and Lys749. Lys760 carries the post-translational modification N6-acetyllysine; alternate. Lys760 participates in a covalent cross-link: Glycyl lysine isopeptide (Lys-Gly) (interchain with G-Cter in SUMO2); alternate. Disordered stretches follow at residues 778-841 and 855-1029; these read KWEL…EEKR and QDEL…KNKH. Positions 786 to 806 are enriched in acidic residues; that stretch reads EESEEEENQNQEEESEDEEDT. Ser788, Ser800, and Ser811 each carry phosphoserine. 2 stretches are compositionally biased toward basic and acidic residues: residues 810 to 841 and 874 to 922; these read KSEE…EEKR and QVEH…TPTR. Glycyl lysine isopeptide (Lys-Gly) (interchain with G-Cter in SUMO2) cross-links involve residues Lys822, Lys829, and Lys832. Residues 837 to 915 are a coiled coil; that stretch reads SEEKRAKLRE…ESRSKDKKEK (79 aa). Thr931 is modified (phosphothreonine). Residues Ser946 and Ser948 each carry the phosphoserine modification. Positions 950 to 980 are enriched in basic and acidic residues; it reads KSERSERSERSHKESSRSRSSHKDSPRDVSK. Residues 991 to 1029 show a composition bias toward basic residues; the sequence is TPKRSRRSRSRSPKKSGKKSRSQSRSPHRSHKKSKKNKH.

The protein belongs to the splicing factor SR family. In terms of assembly, interacts with ERBB4.

The protein resides in the nucleus. The sequence is that of U2 snRNP-associated SURP motif-containing protein (U2SURP) from Homo sapiens (Human).